The chain runs to 496 residues: Solute carrier family 2, facilitated glucose transporter member 3 (496 aa).

At 1–10 the chain is on the cytoplasmic side; the sequence is MGTQKVTPAL. Residues 11 to 32 form a helical membrane-spanning segment; sequence IFAITVATIGSFQFGYNTGVIN. The Extracellular segment spans residues 33–64; that stretch reads APEKIIKEFINKTLTDKGNAPPSEVLLTSLWS. An N-linked (GlcNAc...) asparagine glycan is attached at Asn-43. Residues 65–85 traverse the membrane as a helical segment; sequence LSVAIFSVGGMIGSFSVGLFV. Residues 86–90 lie on the Cytoplasmic side of the membrane; sequence NRFGR. A helical transmembrane segment spans residues 91–111; it reads RNSMLIVNLLAVTGGCFMGLC. Residues 112–118 are Extracellular-facing; that stretch reads KVAKSVE. The chain crosses the membrane as a helical span at residues 119–142; that stretch reads MLILGRLVIGLFCGLCTGFVPMYI. At 143 to 153 the chain is on the cytoplasmic side; that stretch reads GEISPTALRGA. The helical transmembrane segment at 154-174 threads the bilayer; it reads FGTLNQLGIVVGILVAQIFGL. Gln-159 contacts D-glucose. Topologically, residues 175–183 are extracellular; the sequence is EFILGSEEL. Residues 184–204 traverse the membrane as a helical segment; the sequence is WPLLLGFTILPAILQSAALPF. Residues 205-269 lie on the Cytoplasmic side of the membrane; that stretch reads CPESPRFLLI…LFRVSSYRQP (65 aa). Residue Thr-232 is modified to Phosphothreonine. The chain crosses the membrane as a helical span at residues 270 to 290; it reads IIISIVLQLSQQLSGINAVFY. The important for selectivity against fructose stretch occupies residues 277–279; that stretch reads QLS. Residues 280 to 281 and Asn-286 each bind D-glucose; that span reads QQ. Residues 291–304 lie on the Extracellular side of the membrane; sequence YSTGIFKDAGVQEP. Residues 305–325 form a helical membrane-spanning segment; the sequence is IYATIGAGVVNTIFTVVSLFL. Residue Asn-315 coordinates D-glucose. The Cytoplasmic segment spans residues 326-331; that stretch reads VERAGR. The chain crosses the membrane as a helical span at residues 332-352; that stretch reads RTLHMIGLGGMAFCSTLMTVS. The Extracellular segment spans residues 353–363; that stretch reads LLLKDNYNGMS. Residues 364–389 traverse the membrane as a helical segment; that stretch reads FVCIGAILVFVAFFEIGPGPIPWFIV. D-glucose contacts are provided by Glu-378 and Trp-386. At 390 to 399 the chain is on the cytoplasmic side; it reads AELFSQGPRP. A helical membrane pass occupies residues 400 to 420; sequence AAMAVAGCSNWTSNFLVGLLF. At 421–429 the chain is on the extracellular side; it reads PSAAHYLGA. The helical transmembrane segment at 430 to 450 threads the bilayer; that stretch reads YVFIIFTGFLITFLAFTFFKV. The Cytoplasmic segment spans residues 451–496; the sequence is PETRGRTFEDITRAFEGQAHGADRSGKDGVMEMNSIEPAKETTTNV. 2 positions are modified to phosphoserine: Ser-475 and Ser-485. Thr-492 is subject to Phosphothreonine.

Belongs to the major facilitator superfamily. Sugar transporter (TC 2.A.1.1) family. Glucose transporter subfamily. As to quaternary structure, interacts with SMIM43; the interaction may promote SLC2A3-mediated glucose transport to meet the energy needs of mesendoderm differentiation. In terms of tissue distribution, highly expressed in brain. Expressed in many tissues.

It localises to the cell membrane. It is found in the perikaryon. The protein resides in the cell projection. The catalysed reaction is D-glucose(out) = D-glucose(in). It catalyses the reaction D-galactose(in) = D-galactose(out). Deoxyglucose transport is inhibited by D-glucose, D-galactose and maltose. Galactose transport is inhibited by D-glucose and maltose. Functionally, facilitative glucose transporter. Can also mediate the uptake of various other monosaccharides across the cell membrane. Mediates the uptake of glucose, 2-deoxyglucose, galactose, mannose, xylose and fucose, and probably also dehydroascorbate. Does not mediate fructose transport. Required for mesendoderm differentiation. In Homo sapiens (Human), this protein is Solute carrier family 2, facilitated glucose transporter member 3.